The following is a 245-amino-acid chain: tRNA pseudouridine synthase A (245 aa).

Aspartate 52 serves as the catalytic Nucleophile. Position 111 (tyrosine 111) interacts with substrate.

This sequence belongs to the tRNA pseudouridine synthase TruA family. Homodimer.

The enzyme catalyses uridine(38/39/40) in tRNA = pseudouridine(38/39/40) in tRNA. Its function is as follows. Formation of pseudouridine at positions 38, 39 and 40 in the anticodon stem and loop of transfer RNAs. This is tRNA pseudouridine synthase A from Rickettsia felis (strain ATCC VR-1525 / URRWXCal2) (Rickettsia azadi).